Consider the following 204-residue polypeptide: UPF0637 protein USA300HOU_1046.1 (204 aa).

The protein belongs to the UPF0637 family.

The protein is UPF0637 protein USA300HOU_1046.1 of Staphylococcus aureus (strain USA300 / TCH1516).